Here is a 205-residue protein sequence, read N- to C-terminus: Small ribosomal subunit protein uS4 (205 aa).

Residues 19 to 45 (IWGRPKSPVNRREYGPGQHGQRRKGKL) are disordered. The S4 RNA-binding domain maps to 94 to 157 (SRLDAVVYRA…KQLAIVLEAV (64 aa)).

This sequence belongs to the universal ribosomal protein uS4 family. As to quaternary structure, part of the 30S ribosomal subunit. Contacts protein S5. The interaction surface between S4 and S5 is involved in control of translational fidelity.

Functionally, one of the primary rRNA binding proteins, it binds directly to 16S rRNA where it nucleates assembly of the body of the 30S subunit. In terms of biological role, with S5 and S12 plays an important role in translational accuracy. The polypeptide is Small ribosomal subunit protein uS4 (Brucella melitensis biotype 2 (strain ATCC 23457)).